Here is a 384-residue protein sequence, read N- to C-terminus: Anhydro-N-acetylmuramic acid kinase (384 aa).

9-16 contacts ATP; sequence GTSYDAID.

Belongs to the anhydro-N-acetylmuramic acid kinase family.

It carries out the reaction 1,6-anhydro-N-acetyl-beta-muramate + ATP + H2O = N-acetyl-D-muramate 6-phosphate + ADP + H(+). The protein operates within amino-sugar metabolism; 1,6-anhydro-N-acetylmuramate degradation. Its pathway is cell wall biogenesis; peptidoglycan recycling. Its function is as follows. Catalyzes the specific phosphorylation of 1,6-anhydro-N-acetylmuramic acid (anhMurNAc) with the simultaneous cleavage of the 1,6-anhydro ring, generating MurNAc-6-P. Is required for the utilization of anhMurNAc either imported from the medium or derived from its own cell wall murein, and thus plays a role in cell wall recycling. The sequence is that of Anhydro-N-acetylmuramic acid kinase from Streptomyces avermitilis (strain ATCC 31267 / DSM 46492 / JCM 5070 / NBRC 14893 / NCIMB 12804 / NRRL 8165 / MA-4680).